The following is a 489-amino-acid chain: Interferon gamma receptor 1 (489 aa).

An N-terminal signal peptide occupies residues 1 to 17 (MALLFLLPLVMQGVSRA). Over 18–245 (EMGTADLGPS…ITIFNSSIKG (228 aa)) the chain is Extracellular. 3 N-linked (GlcNAc...) asparagine glycosylation sites follow: N34, N79, and N86. A disulfide bond links C77 and C85. Residues C122 and C167 are joined by a disulfide bond. An N-linked (GlcNAc...) asparagine glycan is attached at N179. 2 cysteine pairs are disulfide-bonded: C195/C200 and C214/C235. N-linked (GlcNAc...) asparagine glycosylation occurs at N240. Residues 246–266 (SLWIPVVAALLLFLVLSLVFI) traverse the membrane as a helical segment. Residues 267-489 (CFYIKKINPL…RPTEDSKEFS (223 aa)) are Cytoplasmic-facing. The segment at 329–437 (ATVPGMHTED…SEFPPNNKGE (109 aa)) is disordered. Positions 335 to 348 (HTEDNPGKVEHTEE) are enriched in basic and acidic residues. The segment covering 349–360 (LSSITEVVTTEE) has biased composition (polar residues). S369 carries the phosphoserine modification. T372 is modified (phosphothreonine). S378 bears the Phosphoserine mark. Low complexity predominate over residues 379–391 (SSPLSSNQSEPGS). The span at 401 to 412 (NCSESDHSRNGF) shows a compositional bias: basic and acidic residues. Residue S403 is modified to Phosphoserine. Positions 415 to 429 (DSSCLESHSSLSDSE) are enriched in low complexity. The residue at position 457 (Y457) is a Phosphotyrosine.

This sequence belongs to the type II cytokine receptor family. As to quaternary structure, monomer. Heterodimer with IFNGR2, to form the IFNG receptor complex. Interacts with JAK1. Interacts (when phosphorylated) with STAT1. Interacts with SOCS1. Post-translationally, phosphorylated at Ser/Thr residues. Phosphorylation of Tyr-457 is required for IFNG receptor signal transduction. Influenza virus infection leads to phosphorylation in a CSNK1A1-dependent manner. In terms of processing, ubiquitinated after phosphorylation in a CSNK1A1-dependent manner, leading to the lysosome-dependent degradation. Proteasomally degraded through 'Lys-48'-mediated ubiquitination. Ubiquitination is necessary for efficient IFNGR1 signaling.

The protein localises to the cell membrane. In terms of biological role, receptor subunit for interferon gamma/INFG that plays crucial roles in antimicrobial, antiviral, and antitumor responses by activating effector immune cells and enhancing antigen presentation. Associates with transmembrane accessory factor IFNGR2 to form a functional receptor. Upon ligand binding, the intracellular domain of IFNGR1 opens out to allow association of downstream signaling components JAK1 and JAK2. In turn, activated JAK1 phosphorylates IFNGR1 to form a docking site for STAT1. Subsequent phosphorylation of STAT1 leads to dimerization, translocation to the nucleus, and stimulation of target gene transcription. STAT3 can also be activated in a similar manner although activation seems weaker. IFNGR1 intracellular domain phosphorylation also provides a docking site for SOCS1 that regulates the JAK-STAT pathway by competing with STAT1 binding to IFNGR1. This chain is Interferon gamma receptor 1, found in Homo sapiens (Human).